A 6061-amino-acid polypeptide reads, in one-letter code: Intermembrane lipid transfer protein vps13B (6061 aa).

The Chorein N-terminal domain maps to 2–115 (FESLVADIIA…QLELKRKKLE (114 aa)). 17 disordered regions span residues 590–623 (PKYK…NNNK), 803–828 (DIKN…NNKN), 1386–1414 (QQQQ…NVSS), 1604–1644 (SSNN…GTLS), 2747–2784 (QTNQ…EDQE), 2950–2972 (GLNN…NSST), 3364–3401 (LNRN…DDDD), 3855–3876 (QQQQ…RNKK), 4011–4068 (QQQQ…FKNN), 4107–4132 (ELEK…RPDE), 4262–4297 (NSSN…YNGR), 4321–4442 (SQSI…TSPG), 4601–4631 (TSSP…KKSL), 4753–4797 (NNNN…TQEF), 4861–4882 (NAGG…SISQ), 5003–5030 (LATK…DGIE), and 5372–5429 (NINN…IGQD). The segment covering 595 to 614 (HQENKENKENQENQENENKN) has biased composition (basic and acidic residues). Residues 1395 to 1406 (QQQKEEEQHGGE) are compositionally biased toward basic and acidic residues. The segment covering 2747 to 2756 (QTNQNNQKNR) has biased composition (polar residues). The segment covering 2774-2784 (NDNDEYDEDQE) has biased composition (acidic residues). Positions 3388 to 3401 (IDDDDGDGDDDDDD) are enriched in acidic residues. The segment covering 4015-4024 (QEKEKEIEKE) has biased composition (basic and acidic residues). Residues 4031 to 4040 (LKNNNNISIN) show a composition bias toward low complexity. Acidic residues predominate over residues 4041 to 4057 (DNDDDDDDDDNDNDENN). Over residues 4058–4068 (NENYEFNFKNN) the composition is skewed to low complexity. Residues 4107 to 4120 (ELEKKKRERKENSK) show a composition bias toward basic and acidic residues. Composition is skewed to low complexity over residues 4330 to 4383 (TTTT…VGSN) and 4399 to 4429 (NNNN…NNNN). Positions 4430–4441 (SNDNQVNFSTSP) are enriched in polar residues. Low complexity-rich tracts occupy residues 4601-4617 (TSSP…NYNN) and 4753-4784 (NNNN…SNEN). Residues 4785–4794 (SQDQPPSIKT) are compositionally biased toward polar residues. Low complexity-rich tracts occupy residues 5013–5030 (DNSN…DGIE) and 5372–5384 (NINN…NNDN). Basic and acidic residues predominate over residues 5385-5409 (NKNKNNNDKNKNNDKNNKNNNDKNN). A compositionally biased stretch (low complexity) spans 5410 to 5421 (NDNNNNNNNNNN).

The protein belongs to the VPS13 family.

The protein localises to the membrane. Mediates the transfer of lipids between membranes at organelle contact sites. The polypeptide is Intermembrane lipid transfer protein vps13B (vps13B) (Dictyostelium discoideum (Social amoeba)).